The chain runs to 417 residues: Zinc finger protein CONSTANS-LIKE 16 (417 aa).

Residues Cys17, Cys20, Cys40, and His45 each contribute to the Zn(2+) site. A B box-type; atypical zinc finger spans residues 17–59 (CDSCVKRRARWYCAADDAFLCQSCDSLVHSANPLARRHERVRL). Positions 63–105 (SPAVVKHSNHSSASPPHEVATWHHGFTRKARTPRGSGKKNNSS) are disordered. Positions 212-239 (LSNSEMFKIEKDEIEEEVEEIKAMSMDI) form a coiled coil. Residues 361–403 (REARVSRYREKRRTRLFSKKIRYEVRKLNAEKRPRMKGRFVKR) enclose the CCT domain.

This sequence belongs to the CONSTANS family.

It is found in the nucleus. This is Zinc finger protein CONSTANS-LIKE 16 (COL16) from Arabidopsis thaliana (Mouse-ear cress).